Here is a 347-residue protein sequence, read N- to C-terminus: NADH-quinone oxidoreductase subunit H 1 (347 aa).

9 consecutive transmembrane segments (helical) span residues 14–34, 50–70, 83–103, 115–135, 161–181, 198–218, 258–278, 286–306, and 321–341; these read IMIGQSLLLLVALLLFIAYVL, PNVVGPFGLFQSFADLLKFVF, IFLLAPLVSVTLALAAWAVIP, VGILFVFAISSLEVYGIIMGG, IGFVIVTVLLCVGSLNLTDIV, FLDWHWLSLFPMFIIFFISAL, AICLMCALTTILFLGGWLPPV, VPGIIWFVLKASLVFFMFAMV, and LGWKVFLPLSLAMVVIVAFVL.

It belongs to the complex I subunit 1 family. NDH-1 is composed of 14 different subunits. Subunits NuoA, H, J, K, L, M, N constitute the membrane sector of the complex.

It is found in the cell inner membrane. It carries out the reaction a quinone + NADH + 5 H(+)(in) = a quinol + NAD(+) + 4 H(+)(out). Functionally, NDH-1 shuttles electrons from NADH, via FMN and iron-sulfur (Fe-S) centers, to quinones in the respiratory chain. The immediate electron acceptor for the enzyme in this species is believed to be ubiquinone. Couples the redox reaction to proton translocation (for every two electrons transferred, four hydrogen ions are translocated across the cytoplasmic membrane), and thus conserves the redox energy in a proton gradient. This subunit may bind ubiquinone. This chain is NADH-quinone oxidoreductase subunit H 1, found in Rhizobium meliloti (strain 1021) (Ensifer meliloti).